The chain runs to 172 residues: Shikimate kinase (172 aa).

Residue 11–16 (GAGKST) coordinates ATP. Ser15 contacts Mg(2+). Positions 33, 57, and 79 each coordinate substrate. Arg117 contacts ATP. Substrate is bound at residue Arg136. Position 153 (Arg153) interacts with ATP.

Belongs to the shikimate kinase family. As to quaternary structure, monomer. Requires Mg(2+) as cofactor.

It localises to the cytoplasm. It catalyses the reaction shikimate + ATP = 3-phosphoshikimate + ADP + H(+). It functions in the pathway metabolic intermediate biosynthesis; chorismate biosynthesis; chorismate from D-erythrose 4-phosphate and phosphoenolpyruvate: step 5/7. Catalyzes the specific phosphorylation of the 3-hydroxyl group of shikimic acid using ATP as a cosubstrate. This chain is Shikimate kinase, found in Pseudomonas entomophila (strain L48).